A 638-amino-acid chain; its full sequence is Chaperone protein HtpG (638 aa).

An a; substrate-binding region spans residues 1–346 (MSQQETHGFQ…SNDLPLNVSR (346 aa)). Residues 347–563 (EILQDNKVTT…EGEMSTQMIK (217 aa)) are b. The c stretch occupies residues 564 to 638 (LMQAAGQDVP…MNQMLLASVK (75 aa)).

Belongs to the heat shock protein 90 family. In terms of assembly, homodimer.

It is found in the cytoplasm. In terms of biological role, molecular chaperone. Has ATPase activity. The chain is Chaperone protein HtpG from Shewanella pealeana (strain ATCC 700345 / ANG-SQ1).